The chain runs to 228 residues: MSKLSHPQVLEQIKYGLIASCQPVDNGPMDSPEIVAAMAQASVIGGAAGLRIEGIENLKATRNVVNVPIIGIVKRDLPDSPVRISPFLQDIEELAAAGADIIAFDGTDRVRPTTREAIIKRIKELGCLAMADCSNFEEGMYCHNLGVEIIGSTMSGYTGGEIPAEPDYQLVKDLNAAGCRVMAEGRYNTPELAKTAIEIGAYSVTVGSALTRLEHIVSWFADAVKSAK.

The protein belongs to the NanE family.

The catalysed reaction is an N-acyl-D-glucosamine 6-phosphate = an N-acyl-D-mannosamine 6-phosphate. It participates in amino-sugar metabolism; N-acetylneuraminate degradation; D-fructose 6-phosphate from N-acetylneuraminate: step 3/5. In terms of biological role, converts N-acetylmannosamine-6-phosphate (ManNAc-6-P) to N-acetylglucosamine-6-phosphate (GlcNAc-6-P). This Pasteurella multocida (strain Pm70) protein is Putative N-acetylmannosamine-6-phosphate 2-epimerase.